Reading from the N-terminus, the 121-residue chain is uncharacterized protein (121 aa).

Disordered regions lie at residues 24–43 (SGRTGGQRKGASLARPGRGG) and 100–121 (DHENSQNNSKRRCKVNCETDQR).

This is an uncharacterized protein from Homo sapiens (Human).